Here is a 137-residue protein sequence, read N- to C-terminus: Large-conductance mechanosensitive channel (137 aa).

A run of 3 helical transmembrane segments spans residues 15 to 35 (VDLAIGVIIGGAFGGLVNSIV), 38 to 58 (IIMPIIGLITGGIDFSNMFIQ), and 80 to 100 (GNFVTLLINFLIIAWVLFLVV).

Belongs to the MscL family. As to quaternary structure, homopentamer.

The protein localises to the cell inner membrane. Channel that opens in response to stretch forces in the membrane lipid bilayer. May participate in the regulation of osmotic pressure changes within the cell. This is Large-conductance mechanosensitive channel from Brucella anthropi (strain ATCC 49188 / DSM 6882 / CCUG 24695 / JCM 21032 / LMG 3331 / NBRC 15819 / NCTC 12168 / Alc 37) (Ochrobactrum anthropi).